The primary structure comprises 150 residues: MQIILLEKVVNLGNLGDIVKVKDGYARNFLIPNKQARRATKEALAEFEVRRAELEKVAAEKLAAAQAQGEKLAGSTVQINQKAGVDGRLFGSVTNADIAEALVKQGFAVEKAQVRLPEGPLKLVGEHAVQISLHTDVLVDVTVAVIGEHV.

Belongs to the bacterial ribosomal protein bL9 family.

Its function is as follows. Binds to the 23S rRNA. This is Large ribosomal subunit protein bL9 from Paraburkholderia xenovorans (strain LB400).